Here is a 350-residue protein sequence, read N- to C-terminus: NAD-dependent protein deacetylase sirtuin-2 (350 aa).

Positions 4-14 (LRNLFTQTLGL) match the Nuclear export signal motif. A Phosphoserine modification is found at S16. A Deacetylase sirtuin-type domain is found at 20–301 (RLLDELTLEG…LALADLLGWK (282 aa)). NAD(+)-binding positions include 48-52 (AGIST) and 58-60 (DFR). S63 carries the post-translational modification Phosphoserine. An NAD(+)-binding site is contributed by 130-133 (QNID). The Proton acceptor role is filled by H150. Zn(2+)-binding residues include C158 and C163. At S170 the chain carries Phosphoserine. Zn(2+) is bound by residues C184 and C187. NAD(+) contacts are provided by residues 225 to 226 (TS), 249 to 251 (NKE), and C287. The tract at residues 312–350 (ANIDAQSGSQASNPSATVSPRKSPPPAKEAARTKEKEEH) is disordered. A compositionally biased stretch (polar residues) spans 315 to 331 (DAQSGSQASNPSATVSP). Phosphoserine occurs at positions 330 and 334. Basic and acidic residues predominate over residues 340-350 (EAARTKEKEEH).

This sequence belongs to the sirtuin family. Class I subfamily. As to quaternary structure, interacts with CDC20, FOXO3 and FZR1. Associates with microtubules in primary cortical mature neurons. Homotrimer. Interacts (via both phosphorylated, unphosphorylated, active or inactive forms) with HDAC6; the interaction is necessary for the complex to interact with alpha-tubulin, suggesting that these proteins belong to a large complex that deacetylates the cytoskeleton. Interacts with FOXO1; the interaction is disrupted upon serum-starvation or oxidative stress, leading to increased level of acetylated FOXO1 and induction of autophagy. Interacts with RELA; the interaction occurs in the cytoplasm and is increased in a TNF-alpha-dependent manner. Interacts with HOXA10; the interaction is direct. Interacts with YWHAB and YWHAG; the interactions occur in a AKT-dependent manner and increase SIRT2-dependent TP53 deacetylation. Interacts with MAPK1/ERK2 and MAPK3/ERK1; the interactions increase SIRT2 stability and deacetylation activity. Interacts (phosphorylated form) with KMT5A isoform 2; the interaction is direct, stimulates KMT5A-mediated methyltransferase activity on histone at 'Lys-20' (H4K20me1) and is increased in a H(2)O(2)-induced oxidative stress-dependent manner. Interacts with G6PD; the interaction is enhanced by H(2)O(2) treatment. Interacts with a G1/S-specific cyclin E-CDK2 complex. Interacts with AURKA, CDK5R1 (p35 form) and CDK5 and HIF1A. Interacts with the tRNA ligase SARS1; recruited to the VEGFA promoter via interaction with SARS1. Interacts with BEX4; negatively regulates alpha-tubulin deacetylation by SIRT2. Requires Zn(2+) as cofactor. In terms of processing, phosphorylated at phosphoserine and phosphothreonine. Phosphorylated at Ser-330 by a mitotic kinase CDK1/cyclin B at the G2/M transition; phosphorylation regulates the delay in cell-cycle progression. Phosphorylated at Ser-330 by a mitotic kinase G1/S-specific cyclin E/Cdk2 complex; phosphorylation inactivates SIRT2-mediated alpha-tubulin deacetylation and thereby negatively regulates cell adhesion, cell migration and neurite outgrowth during neuronal differentiation. Phosphorylated by cyclin A/Cdk2 and p35-Cdk5 complexes and to a lesser extent by the cyclin D3/Cdk4 and cyclin B/Cdk1, in vitro. Dephosphorylated at Ser-330 by CDC14A and CDC14B around early anaphase. Acetylated by EP300; acetylation leads both to the decreased of SIRT2-mediated alpha-tubulin deacetylase activity and SIRT2-mediated down-regulation of TP53 transcriptional activity. Post-translationally, ubiquitinated. Expressed in the cerebellum, cerebral cortex and cervival spinal cord. Expressed in Purkinje cells, oligodendrocytes and Schwann cells (at protein level). Expressed in the central nervous system (CNS).

It is found in the nucleus. Its subcellular location is the cytoplasm. The protein localises to the perinuclear region. It localises to the cytoskeleton. The protein resides in the microtubule organizing center. It is found in the centrosome. Its subcellular location is the centriole. The protein localises to the spindle. It localises to the midbody. The protein resides in the chromosome. It is found in the perikaryon. Its subcellular location is the cell projection. The protein localises to the growth cone. It localises to the myelin membrane. The enzyme catalyses N(6)-acetyl-L-lysyl-[protein] + NAD(+) + H2O = 2''-O-acetyl-ADP-D-ribose + nicotinamide + L-lysyl-[protein]. The catalysed reaction is N(6)-tetradecanoyl-L-lysyl-[protein] + NAD(+) + H2O = 2''-O-tetradecanoyl-ADP-D-ribose + nicotinamide + L-lysyl-[protein]. It carries out the reaction N(6)-hexadecanoyl-L-lysyl-[protein] + NAD(+) + H2O = 2''-O-hexadecanoyl-ADP-D-ribose + nicotinamide + L-lysyl-[protein]. Its activity is regulated as follows. Inhibited by Sirtinol, A3 and M15 small molecules. Inhibited by nicotinamide. Inhibited by a macrocyclic peptide inhibitor S2iL5. Inhibited by EP300-induced acetylation. NAD-dependent protein deacetylase, which deacetylates internal lysines on histone and alpha-tubulin as well as many other proteins such as key transcription factors. Participates in the modulation of multiple and diverse biological processes such as cell cycle control, genomic integrity, microtubule dynamics, cell differentiation, metabolic networks, and autophagy. Plays a major role in the control of cell cycle progression and genomic stability. Functions in the antephase checkpoint preventing precocious mitotic entry in response to microtubule stress agents, and hence allowing proper inheritance of chromosomes. Positively regulates the anaphase promoting complex/cyclosome (APC/C) ubiquitin ligase complex activity by deacetylating CDC20 and FZR1, then allowing progression through mitosis. Associates both with chromatin at transcriptional start sites (TSSs) and enhancers of active genes. Plays a role in cell cycle and chromatin compaction through epigenetic modulation of the regulation of histone H4 'Lys-20' methylation (H4K20me1) during early mitosis. Specifically deacetylates histone H4 at 'Lys-16' (H4K16ac) between the G2/M transition and metaphase enabling H4K20me1 deposition by KMT5A leading to ulterior levels of H4K20me2 and H4K20me3 deposition throughout cell cycle, and mitotic S-phase progression. Deacetylates KMT5A modulating KMT5A chromatin localization during the mitotic stress response. Also deacetylates histone H3 at 'Lys-57' (H3K56ac) during the mitotic G2/M transition. During oocyte meiosis progression, may deacetylate histone H4 at 'Lys-16' (H4K16ac) and alpha-tubulin, regulating spindle assembly and chromosome alignment by influencing microtubule dynamics and kinetochore function. Deacetylates histone H4 at 'Lys-16' (H4K16ac) at the VEGFA promoter and thereby contributes to regulate expression of VEGFA, a key regulator of angiogenesis. Deacetylates alpha-tubulin at 'Lys-40' and hence controls neuronal motility, oligodendroglial cell arbor projection processes and proliferation of non-neuronal cells. Phosphorylation at Ser-368 by a G1/S-specific cyclin E-CDK2 complex inactivates SIRT2-mediated alpha-tubulin deacetylation, negatively regulating cell adhesion, cell migration and neurite outgrowth during neuronal differentiation. Deacetylates PARD3 and participates in the regulation of Schwann cell peripheral myelination formation during early postnatal development and during postinjury remyelination. Involved in several cellular metabolic pathways. Plays a role in the regulation of blood glucose homeostasis by deacetylating and stabilizing phosphoenolpyruvate carboxykinase PCK1 activity in response to low nutrient availability. Acts as a key regulator in the pentose phosphate pathway (PPP) by deacetylating and activating the glucose-6-phosphate G6PD enzyme, and therefore, stimulates the production of cytosolic NADPH to counteract oxidative damage. Maintains energy homeostasis in response to nutrient deprivation as well as energy expenditure by inhibiting adipogenesis and promoting lipolysis. Attenuates adipocyte differentiation by deacetylating and promoting FOXO1 interaction to PPARG and subsequent repression of PPARG-dependent transcriptional activity. Plays a role in the regulation of lysosome-mediated degradation of protein aggregates by autophagy in neuronal cells. Deacetylates FOXO1 in response to oxidative stress or serum deprivation, thereby negatively regulating FOXO1-mediated autophagy. Deacetylates a broad range of transcription factors and co-regulators regulating target gene expression. Deacetylates transcriptional factor FOXO3 stimulating the ubiquitin ligase SCF(SKP2)-mediated FOXO3 ubiquitination and degradation. Deacetylates HIF1A and therefore promotes HIF1A degradation and inhibition of HIF1A transcriptional activity in tumor cells in response to hypoxia. Deacetylates RELA in the cytoplasm inhibiting NF-kappaB-dependent transcription activation upon TNF-alpha stimulation. Inhibits transcriptional activation by deacetylating p53/TP53 and EP300. Also deacetylates EIF5A. Functions as a negative regulator on oxidative stress-tolerance in response to anoxia-reoxygenation conditions. Plays a role as tumor suppressor. In addition to protein deacetylase activity, also has activity toward long-chain fatty acyl groups and mediates protein-lysine demyristoylation and depalmitoylation of target proteins, such as ARF6 and KRAS, thereby regulating their association with membranes. In Rattus norvegicus (Rat), this protein is NAD-dependent protein deacetylase sirtuin-2 (Sirt2).